Here is a 417-residue protein sequence, read N- to C-terminus: Histidine--tRNA ligase (417 aa).

The protein belongs to the class-II aminoacyl-tRNA synthetase family. In terms of assembly, homodimer.

It is found in the cytoplasm. The enzyme catalyses tRNA(His) + L-histidine + ATP = L-histidyl-tRNA(His) + AMP + diphosphate + H(+). This Nitratidesulfovibrio vulgaris (strain ATCC 29579 / DSM 644 / CCUG 34227 / NCIMB 8303 / VKM B-1760 / Hildenborough) (Desulfovibrio vulgaris) protein is Histidine--tRNA ligase.